The following is a 363-amino-acid chain: MQLGRSGRRSQKQKHEVDEVYFTLTRVDRSCPYLTVPGPPGAESGAPVRLGLRQRAVSSSRNPNSAGRTPNSYLTQAPVWRRSAPAQPPAPQTRHFPGRGADPALGSLPAAGLSGLCARTTGGTAQPPGARDSGASPGAQPQRHRPGCRGPPGSPVIRGPPRCREPGTAHGAQTPPPTRPNWPRRQPSRGSCALSSRQYGERPPAPPWTQPSVPRRGAATWGQEKAEYATPLGTQEARRASGGRGGVDHGDQGLSPCCGDGGARGRRRLPTFWPSGLLRLRLDSLGALPPEPSRAGRGRLFGLSVVLLKRNAGGEATPREGGPRRRWLRESCSPLPARHSRRRASWVSRWMEGAPPRMPSLPL.

Residues 35 to 262 form a disordered region; it reads TVPGPPGAES…GLSPCCGDGG (228 aa). A compositionally biased stretch (polar residues) spans 56 to 75; it reads AVSSSRNPNSAGRTPNSYLT. Positions 100 to 116 are enriched in low complexity; the sequence is GADPALGSLPAAGLSGL.

This is an uncharacterized protein from Homo sapiens (Human).